The sequence spans 328 residues: RING finger protein 175 (328 aa).

5 helical membrane-spanning segments follow: residues 51-71 (MHVE…IVLV), 83-103 (LVTL…LYWW), 104-121 (RFLS…YILF), 149-169 (AFGV…NLFF), and 180-200 (GIVS…FAEI). The RING-type; atypical zinc finger occupies 227–277 (CAVCGQKIIVELDEEGLIENTYQLSCNHVFHEFCIRGWCIVGKKQTCPYCK).

It localises to the membrane. The polypeptide is RING finger protein 175 (RNF175) (Homo sapiens (Human)).